We begin with the raw amino-acid sequence, 227 residues long: MAYPFQLGLQDATSPIMEELMNFHDHTLMIVFLISTLVLYIISLMLTTKLTHTSTMDAQEVETVWTILPAVILIMIALPSLRILYMMDEINNPVLTVKTMGHQWYWSYEYTDYEDLCFDSYMIPTNDLKPGELRLLEVDNRVVLPMELPIRMLISSEDVLHSWAVPSLGLKTDAIPGRLNQATVTSNRPGLFYGQCSEICGSNHSFMPIVLEMVPLKHFENWSTSMI.

Residues Met-1–Ser-14 are Mitochondrial intermembrane-facing. A helical transmembrane segment spans residues Pro-15–Met-45. The Mitochondrial matrix portion of the chain corresponds to Leu-46 to Gln-59. Residues Glu-60 to Met-87 form a helical membrane-spanning segment. Residues Asp-88 to Ile-227 lie on the Mitochondrial intermembrane side of the membrane. Cu cation is bound by residues His-161, Cys-196, Glu-198, Cys-200, His-204, and Met-207. Position 198 (Glu-198) interacts with Mg(2+).

This sequence belongs to the cytochrome c oxidase subunit 2 family. As to quaternary structure, component of the cytochrome c oxidase (complex IV, CIV), a multisubunit enzyme composed of 14 subunits. The complex is composed of a catalytic core of 3 subunits MT-CO1, MT-CO2 and MT-CO3, encoded in the mitochondrial DNA, and 11 supernumerary subunits COX4I, COX5A, COX5B, COX6A, COX6B, COX6C, COX7A, COX7B, COX7C, COX8 and NDUFA4, which are encoded in the nuclear genome. The complex exists as a monomer or a dimer and forms supercomplexes (SCs) in the inner mitochondrial membrane with NADH-ubiquinone oxidoreductase (complex I, CI) and ubiquinol-cytochrome c oxidoreductase (cytochrome b-c1 complex, complex III, CIII), resulting in different assemblies (supercomplex SCI(1)III(2)IV(1) and megacomplex MCI(2)III(2)IV(2)). Found in a complex with TMEM177, COA6, COX18, COX20, SCO1 and SCO2. Interacts with TMEM177 in a COX20-dependent manner. Interacts with COX20. Interacts with COX16. It depends on Cu cation as a cofactor.

It localises to the mitochondrion inner membrane. The enzyme catalyses 4 Fe(II)-[cytochrome c] + O2 + 8 H(+)(in) = 4 Fe(III)-[cytochrome c] + 2 H2O + 4 H(+)(out). Functionally, component of the cytochrome c oxidase, the last enzyme in the mitochondrial electron transport chain which drives oxidative phosphorylation. The respiratory chain contains 3 multisubunit complexes succinate dehydrogenase (complex II, CII), ubiquinol-cytochrome c oxidoreductase (cytochrome b-c1 complex, complex III, CIII) and cytochrome c oxidase (complex IV, CIV), that cooperate to transfer electrons derived from NADH and succinate to molecular oxygen, creating an electrochemical gradient over the inner membrane that drives transmembrane transport and the ATP synthase. Cytochrome c oxidase is the component of the respiratory chain that catalyzes the reduction of oxygen to water. Electrons originating from reduced cytochrome c in the intermembrane space (IMS) are transferred via the dinuclear copper A center (CU(A)) of subunit 2 and heme A of subunit 1 to the active site in subunit 1, a binuclear center (BNC) formed by heme A3 and copper B (CU(B)). The BNC reduces molecular oxygen to 2 water molecules using 4 electrons from cytochrome c in the IMS and 4 protons from the mitochondrial matrix. In Apodemus semotus (Taiwan field mouse), this protein is Cytochrome c oxidase subunit 2 (MT-CO2).